Reading from the N-terminus, the 143-residue chain is Putative pre-16S rRNA nuclease (143 aa).

This sequence belongs to the YqgF nuclease family.

It localises to the cytoplasm. Functionally, could be a nuclease involved in processing of the 5'-end of pre-16S rRNA. This is Putative pre-16S rRNA nuclease from Salinibacter ruber (strain DSM 13855 / M31).